A 316-amino-acid polypeptide reads, in one-letter code: Methionyl-tRNA formyltransferase (316 aa).

Residue 112–115 (SLLP) coordinates (6S)-5,6,7,8-tetrahydrofolate.

This sequence belongs to the Fmt family.

It carries out the reaction L-methionyl-tRNA(fMet) + (6R)-10-formyltetrahydrofolate = N-formyl-L-methionyl-tRNA(fMet) + (6S)-5,6,7,8-tetrahydrofolate + H(+). Its function is as follows. Attaches a formyl group to the free amino group of methionyl-tRNA(fMet). The formyl group appears to play a dual role in the initiator identity of N-formylmethionyl-tRNA by promoting its recognition by IF2 and preventing the misappropriation of this tRNA by the elongation apparatus. The chain is Methionyl-tRNA formyltransferase from Trichlorobacter lovleyi (strain ATCC BAA-1151 / DSM 17278 / SZ) (Geobacter lovleyi).